The chain runs to 507 residues: RNA-splicing ligase RtcB homolog (507 aa).

5 residues coordinate Mn(2+): aspartate 121, cysteine 124, histidine 229, histidine 261, and histidine 355. Position 228-232 (228-232 (NHYAE)) interacts with GMP. Residues 355–356 (HN), 404–407 (GGTM), serine 411, 430–433 (HGAG), and lysine 506 each bind GMP. Histidine 430 (GMP-histidine intermediate) is an active-site residue.

It belongs to the RtcB family. As to quaternary structure, catalytic component of the tRNA-splicing ligase complex. Mn(2+) is required as a cofactor.

It catalyses the reaction a 3'-end 3'-phospho-ribonucleotide-RNA + a 5'-end dephospho-ribonucleoside-RNA + GTP = a ribonucleotidyl-ribonucleotide-RNA + GMP + diphosphate. It carries out the reaction a 3'-end 2',3'-cyclophospho-ribonucleotide-RNA + a 5'-end dephospho-ribonucleoside-RNA + GTP + H2O = a ribonucleotidyl-ribonucleotide-RNA + GMP + diphosphate + H(+). Catalytic subunit of the tRNA-splicing ligase complex that acts by directly joining spliced tRNA halves to mature-sized tRNAs by incorporating the precursor-derived splice junction phosphate into the mature tRNA as a canonical 3',5'-phosphodiester. May act as an RNA ligase with broad substrate specificity, and may function toward other RNAs. This Micromonas pusilla (strain CCMP1545) (Picoplanktonic green alga) protein is RNA-splicing ligase RtcB homolog.